The primary structure comprises 860 residues: MQEQYRPEEIESKVQLHWDEKRTFEVTEDESKEKYYCLSMLPYPSGRLHMGHVRNYTIGDVVARYQRMLGKNVLQPIGWDAFGLPAEGAAVKNNTAPAPWTYDNIAYMKNQLKTLGFGYDWSREIATCTPEYYRWEQKFFTELYKKGLVYKKTSAVNWCPNDQTVLANEQVIDGCCWRCDTKVERKEIPQWFIKITAYADELLRDLDKLDHWPDTVKTMQRNWIGRSEGVEITFDVKGYDNTLTVYTTRPDTFMGATYLAVAAGHPLAQKAAANNAELAAFIDECRNTKVAEAEMATMEKKGVDTGYKAIHPLTGEEIPVWAANFVLMEYGTGAVMAVPGHDQRDYEFASKYGLTIKPVILAADSSEPDLSEQALTEKGVLFNSGEFDGLAFEAAFNAIADKLAEKGVGERKVNYRLRDWGVSRQRYWGAPIPMVTLEDGTVLPTPEDQLPVILPEDVVMDGITSPIKADPEWAKTTVNGMPALRETDTFDTFMESSWYYARYTCPQYQEGMLDSKAANYWLPVDIYIGGIEHAIMHLLYFRFFHKLMRDAGMVTSDEPAKQLLCQGMVLADAFYYVGENGERNWVSPVDAIVERDEKGRIVKAKDAAGHELVYTGMSKMSKSKNNGIDPQVMVERYGADTVRLFMMFASPADMTLEWQESGVEGANRFIKRVWKLVYEHTAKGPVAALNVDALSEDQKALRRDVHKTIAKVTDDIGRRQTFNTAIAAIMELMNKLAKAPQEGEQDRALLQEALQAVVRMLNPFTPHVCFTLWQELGGEGDIDNAPWPVADEQAMVENTTLVVVQVNGKVRGKITVAVDATEEQVRERAGQEHLVAKYLDGVTVRKVIYVPGKLLNLVVG.

Positions 42–52 match the 'HIGH' region motif; the sequence is PYPSGRLHMGH. The 'KMSKS' region motif lies at 619–623; the sequence is KMSKS. Residue K622 coordinates ATP.

Belongs to the class-I aminoacyl-tRNA synthetase family.

Its subcellular location is the cytoplasm. The catalysed reaction is tRNA(Leu) + L-leucine + ATP = L-leucyl-tRNA(Leu) + AMP + diphosphate. The polypeptide is Leucine--tRNA ligase (Salmonella choleraesuis (strain SC-B67)).